Here is a 127-residue protein sequence, read N- to C-terminus: MNALGRHVIAELYGCGFDVLNDVKRVEEIMVRSALEAGAEIREVAFHKFSPQGVSGVVVISESHLAIHTWPELGYAAVDVFTCGDTVDPWDATNYLAKEFGAKYMTAKETKRGVMVEEFAESQAVNL.

The active-site Schiff-base intermediate with substrate; via pyruvic acid is Ser63. Residue Ser63 is modified to Pyruvic acid (Ser); by autocatalysis. Residue His68 is the Proton acceptor; for processing activity of the active site. Cys83 serves as the catalytic Proton donor; for catalytic activity.

The protein belongs to the prokaryotic AdoMetDC family. Type 1 subfamily. Heterotetramer of two alpha and two beta chains arranged as a dimer of alpha/beta heterodimers. It depends on pyruvate as a cofactor. Post-translationally, is synthesized initially as an inactive proenzyme. Formation of the active enzyme involves a self-maturation process in which the active site pyruvoyl group is generated from an internal serine residue via an autocatalytic post-translational modification. Two non-identical subunits are generated from the proenzyme in this reaction, and the pyruvate is formed at the N-terminus of the alpha chain, which is derived from the carboxyl end of the proenzyme. The post-translation cleavage follows an unusual pathway, termed non-hydrolytic serinolysis, in which the side chain hydroxyl group of the serine supplies its oxygen atom to form the C-terminus of the beta chain, while the remainder of the serine residue undergoes an oxidative deamination to produce ammonia and the pyruvoyl group blocking the N-terminus of the alpha chain.

The enzyme catalyses S-adenosyl-L-methionine + H(+) = S-adenosyl 3-(methylsulfanyl)propylamine + CO2. The protein operates within amine and polyamine biosynthesis; S-adenosylmethioninamine biosynthesis; S-adenosylmethioninamine from S-adenosyl-L-methionine: step 1/1. Functionally, catalyzes the decarboxylation of S-adenosylmethionine to S-adenosylmethioninamine (dcAdoMet), the propylamine donor required for the synthesis of the polyamines spermine and spermidine from the diamine putrescine. This Carboxydothermus hydrogenoformans (strain ATCC BAA-161 / DSM 6008 / Z-2901) protein is S-adenosylmethionine decarboxylase proenzyme.